We begin with the raw amino-acid sequence, 87 residues long: Phosphoribosyl-ATP pyrophosphatase (87 aa).

Belongs to the PRA-PH family.

It is found in the cytoplasm. The enzyme catalyses 1-(5-phospho-beta-D-ribosyl)-ATP + H2O = 1-(5-phospho-beta-D-ribosyl)-5'-AMP + diphosphate + H(+). The protein operates within amino-acid biosynthesis; L-histidine biosynthesis; L-histidine from 5-phospho-alpha-D-ribose 1-diphosphate: step 2/9. This chain is Phosphoribosyl-ATP pyrophosphatase, found in Saccharopolyspora erythraea (strain ATCC 11635 / DSM 40517 / JCM 4748 / NBRC 13426 / NCIMB 8594 / NRRL 2338).